The sequence spans 360 residues: MRVDLFDFDLPEDSVALRPASPRDSARMLVVRPGGEPVLEDRGVLDLPSFLRQGDALVFNDTKVIPAQLEGVRYRGEHISTPVSLTLHMRVAPDRWKAFARPARRLKPGDRVSFGHGGNACLLGSLDAMVEEKGDAGEVTLRFDLSGPSLDEAIMSVGHIPLPPYIASKRADDARDRTDYQTVYAREEGAVAAPTAGLHFTDRLFAMLDEAGIERHFVTLHVGAGTFLPVKADDTDDHVMHEEIGHVDAVTAAKLNAVRERGGRVVCVGTTSLRLVESAAAEDGTIHAWSGATGIFITPGYRFRAAHMLMTNFHLPKSTLFMLVSAFAGLETMRDAYAHAIATGYRFYSYGDSSLLFRKD.

The protein belongs to the QueA family. Monomer.

The protein resides in the cytoplasm. The catalysed reaction is 7-aminomethyl-7-carbaguanosine(34) in tRNA + S-adenosyl-L-methionine = epoxyqueuosine(34) in tRNA + adenine + L-methionine + 2 H(+). It functions in the pathway tRNA modification; tRNA-queuosine biosynthesis. Its function is as follows. Transfers and isomerizes the ribose moiety from AdoMet to the 7-aminomethyl group of 7-deazaguanine (preQ1-tRNA) to give epoxyqueuosine (oQ-tRNA). This is S-adenosylmethionine:tRNA ribosyltransferase-isomerase from Sinorhizobium medicae (strain WSM419) (Ensifer medicae).